The chain runs to 365 residues: Alanine racemase (365 aa).

The Proton acceptor; specific for D-alanine role is filled by K32. N6-(pyridoxal phosphate)lysine is present on K32. Residue R128 coordinates substrate. Residue Y257 is the Proton acceptor; specific for L-alanine of the active site. A substrate-binding site is contributed by M305.

Belongs to the alanine racemase family. Requires pyridoxal 5'-phosphate as cofactor.

The catalysed reaction is L-alanine = D-alanine. It functions in the pathway amino-acid biosynthesis; D-alanine biosynthesis; D-alanine from L-alanine: step 1/1. Catalyzes the interconversion of L-alanine and D-alanine. May also act on other amino acids. The chain is Alanine racemase (alr) from Francisella tularensis subsp. holarctica (strain OSU18).